A 186-amino-acid chain; its full sequence is MSTLTDTIQIENVVASTDLSQELALEQLATDLPGAEYNPGDFPGVIYRLDDPKSATLIFDSGKAVCTGAQSVDDVHDAISIVVEDLRDLGIDIPPSPPVHVQNIVCSGSLDQDLNLNAIAIGLGLEDVEYEPEQFPGLVYRLNDPDVVVLLFGSGKLVITGGSNPDDAHHALEIIHERLTDLGLLE.

A run of 2 repeats spans residues 10–86 and 101–179.

This sequence belongs to the TBP family.

Its function is as follows. General factor that plays a role in the activation of archaeal genes transcribed by RNA polymerase. Binds specifically to the TATA box promoter element which lies close to the position of transcription initiation. This chain is TATA-box-binding protein D (tbpD), found in Halobacterium salinarum (strain ATCC 700922 / JCM 11081 / NRC-1) (Halobacterium halobium).